A 150-amino-acid polypeptide reads, in one-letter code: Dual specificity protein phosphatase 23 (150 aa).

The 144-residue stretch at 7-150 (NFSWVLPGRL…AVFQFYQRTK (144 aa)) folds into the Tyrosine-protein phosphatase domain. Residue C95 is the Phosphocysteine intermediate of the active site.

Belongs to the protein-tyrosine phosphatase family. Non-receptor class dual specificity subfamily. As to expression, widely expressed.

The protein resides in the cytoplasm. It localises to the cytosol. The protein localises to the nucleus. The enzyme catalyses O-phospho-L-tyrosyl-[protein] + H2O = L-tyrosyl-[protein] + phosphate. It catalyses the reaction O-phospho-L-seryl-[protein] + H2O = L-seryl-[protein] + phosphate. The catalysed reaction is O-phospho-L-threonyl-[protein] + H2O = L-threonyl-[protein] + phosphate. Its function is as follows. Protein phosphatase that mediates dephosphorylation of proteins phosphorylated on Tyr and Ser/Thr residues. In vitro, it can dephosphorylate p44-ERK1 (MAPK3) but not p54 SAPK-beta (MAPK10) in vitro. Able to enhance activation of JNK and p38 (MAPK14). This is Dual specificity protein phosphatase 23 (Dusp23) from Mus musculus (Mouse).